We begin with the raw amino-acid sequence, 70 residues long: uncharacterized protein (70 aa).

Residues 4–24 form a helical membrane-spanning segment; that stretch reads VKTIAMLAMLVIVAALIYMGY.

It localises to the host membrane. This is an uncharacterized protein from Dryophytes versicolor (chameleon treefrog).